The chain runs to 511 residues: UDP-N-acetylmuramate--L-alanine ligase (511 aa).

ATP is bound at residue 127–133 (GTHGKTT). Positions 481–511 (VGTVPGGEVGGATTIGGTVPGGSAPGASAAG) are disordered. Residues 484–504 (VPGGEVGGATTIGGTVPGGSA) show a composition bias toward gly residues.

The protein belongs to the MurCDEF family.

Its subcellular location is the cytoplasm. The catalysed reaction is UDP-N-acetyl-alpha-D-muramate + L-alanine + ATP = UDP-N-acetyl-alpha-D-muramoyl-L-alanine + ADP + phosphate + H(+). Its pathway is cell wall biogenesis; peptidoglycan biosynthesis. Its function is as follows. Cell wall formation. This Salinispora arenicola (strain CNS-205) protein is UDP-N-acetylmuramate--L-alanine ligase.